Consider the following 96-residue polypeptide: Small ribosomal subunit protein bS6 (96 aa).

The protein belongs to the bacterial ribosomal protein bS6 family.

In terms of biological role, binds together with bS18 to 16S ribosomal RNA. The sequence is that of Small ribosomal subunit protein bS6 from Streptococcus sanguinis (strain SK36).